We begin with the raw amino-acid sequence, 117 residues long: UPF0295 protein GTNG_0491 (117 aa).

A run of 2 helical transmembrane segments spans residues 12–32 (IRTF…LGLF) and 42–62 (LFMV…FWIG).

Belongs to the UPF0295 family.

It localises to the cell membrane. The polypeptide is UPF0295 protein GTNG_0491 (Geobacillus thermodenitrificans (strain NG80-2)).